The sequence spans 369 residues: 3 beta-hydroxysteroid dehydrogenase type 7 (369 aa).

The active-site Proton acceptor is Tyr159. Lys163 is an NAD(+) binding site. A run of 2 helical transmembrane segments spans residues 289-309 (LLPY…QWLL) and 312-334 (LVLY…FTVS).

It belongs to the 3-beta-HSD family. As to expression, predominantly expressed in liver.

The protein localises to the endoplasmic reticulum membrane. The catalysed reaction is 7alpha-hydroxycholesterol + NAD(+) = 7alpha-hydroxycholest-4-en-3-one + NADH + H(+). It carries out the reaction 7alpha,25-dihydroxycholesterol + NAD(+) = 7alpha,25-dihydroxy-4-cholesten-3-one + NADH + H(+). It catalyses the reaction (25R)-cholest-5-en-3beta,7alpha,26-triol + NAD(+) = (25R)-7alpha,26-dihydroxycholest-4-en-3-one + NADH + H(+). The enzyme catalyses (24S)-7alpha-dihydroxycholesterol + NAD(+) = (24S)-7alpha,24-dihydroxycholest-4-en-3-one + NADH + H(+). It participates in lipid metabolism; steroid biosynthesis. In terms of biological role, the 3-beta-HSD enzymatic system plays a crucial role in the biosynthesis of all classes of hormonal steroids. HSD VII is active against four 7-alpha-hydroxylated sterols. Does not metabolize several different C(19/21) steroids as substrates. Involved in bile acid synthesis. Plays a key role in cell positioning and movement in lymphoid tissues by mediating degradation of 7-alpha,25-dihydroxycholesterol (7-alpha,25-OHC): 7-alpha,25-OHC acts as a ligand for the G protein-coupled receptor GPR183/EBI2, a chemotactic receptor for a number of lymphoid cells. The chain is 3 beta-hydroxysteroid dehydrogenase type 7 from Mus musculus (Mouse).